We begin with the raw amino-acid sequence, 122 residues long: Large ribosomal subunit protein uL14 (122 aa).

This sequence belongs to the universal ribosomal protein uL14 family. In terms of assembly, part of the 50S ribosomal subunit. Forms a cluster with proteins L3 and L19. In the 70S ribosome, L14 and L19 interact and together make contacts with the 16S rRNA in bridges B5 and B8.

In terms of biological role, binds to 23S rRNA. Forms part of two intersubunit bridges in the 70S ribosome. This is Large ribosomal subunit protein uL14 from Salinispora tropica (strain ATCC BAA-916 / DSM 44818 / JCM 13857 / NBRC 105044 / CNB-440).